The chain runs to 158 residues: NAD(P)H-quinone oxidoreductase subunit J, chloroplastic (158 aa).

It belongs to the complex I 30 kDa subunit family. As to quaternary structure, NDH is composed of at least 16 different subunits, 5 of which are encoded in the nucleus.

It is found in the plastid. The protein resides in the chloroplast thylakoid membrane. The enzyme catalyses a plastoquinone + NADH + (n+1) H(+)(in) = a plastoquinol + NAD(+) + n H(+)(out). It carries out the reaction a plastoquinone + NADPH + (n+1) H(+)(in) = a plastoquinol + NADP(+) + n H(+)(out). NDH shuttles electrons from NAD(P)H:plastoquinone, via FMN and iron-sulfur (Fe-S) centers, to quinones in the photosynthetic chain and possibly in a chloroplast respiratory chain. The immediate electron acceptor for the enzyme in this species is believed to be plastoquinone. Couples the redox reaction to proton translocation, and thus conserves the redox energy in a proton gradient. The protein is NAD(P)H-quinone oxidoreductase subunit J, chloroplastic of Acorus calamus var. americanus (American sweet flag).